The chain runs to 337 residues: Ribonucleoside-diphosphate reductase small chain (337 aa).

Positions 85, 116, and 119 each coordinate Fe cation. Tyr-123 is a catalytic residue. Fe cation contacts are provided by Glu-178, Glu-212, and His-215.

This sequence belongs to the ribonucleoside diphosphate reductase small chain family. In terms of assembly, heterodimer of a large and a small subunit. Requires Fe cation as cofactor.

It catalyses the reaction a 2'-deoxyribonucleoside 5'-diphosphate + [thioredoxin]-disulfide + H2O = a ribonucleoside 5'-diphosphate + [thioredoxin]-dithiol. Functionally, provides the precursors necessary for DNA synthesis. Catalyzes the biosynthesis of deoxyribonucleotides from the corresponding ribonucleotides. The chain is Ribonucleoside-diphosphate reductase small chain (RNR2) from Trypanosoma brucei brucei.